A 608-amino-acid chain; its full sequence is uncharacterized protein (608 aa).

The first 38 residues, 1-38, serve as a signal peptide directing secretion; it reads MWLQQRLKVFPGLLSSSWARRVLAVSGFLVIIYWYIFS. Residues 39–563 lie on the Extracellular side of the membrane; it reads GSLFRSFWYA…EEHMAKQYRG (525 aa). Asn337 is a glycosylation site (N-linked (GlcNAc...) asparagine). Residues 564 to 584 traverse the membrane as a helical segment; the sequence is LPFLFWFSVASLITLFHLFLF. Residues 585–608 are Cytoplasmic-facing; it reads KLIYNEYCGPGAKPLFRSKEDTSV.

The protein resides in the membrane. This is an uncharacterized protein from Xenopus tropicalis (Western clawed frog).